Consider the following 256-residue polypeptide: Small ribosomal subunit protein eS1 (256 aa).

An N-acetylalanine; partial modification is found at alanine 2.

This sequence belongs to the eukaryotic ribosomal protein eS1 family. Component of the small ribosomal subunit. Mature ribosomes consist of a small (40S) and a large (60S) subunit. The 40S subunit contains about 33 different proteins and 1 molecule of RNA (18S). The 60S subunit contains about 49 different proteins and 3 molecules of RNA (25S, 5.8S and 5S).

It localises to the cytoplasm. In Candida tropicalis (strain ATCC MYA-3404 / T1) (Yeast), this protein is Small ribosomal subunit protein eS1.